Consider the following 282-residue polypeptide: Pantothenate synthetase (282 aa).

ATP is bound at residue 30-37 (MGFLHDGH). Histidine 37 serves as the catalytic Proton donor. Residue glutamine 60 coordinates (R)-pantoate. Glutamine 60 lines the beta-alanine pocket. 146–149 (GQKD) provides a ligand contact to ATP. Glutamine 152 lines the (R)-pantoate pocket. ATP is bound by residues isoleucine 175 and 183–186 (KSSR).

This sequence belongs to the pantothenate synthetase family. As to quaternary structure, homodimer.

The protein resides in the cytoplasm. The catalysed reaction is (R)-pantoate + beta-alanine + ATP = (R)-pantothenate + AMP + diphosphate + H(+). It participates in cofactor biosynthesis; (R)-pantothenate biosynthesis; (R)-pantothenate from (R)-pantoate and beta-alanine: step 1/1. Catalyzes the condensation of pantoate with beta-alanine in an ATP-dependent reaction via a pantoyl-adenylate intermediate. The sequence is that of Pantothenate synthetase from Campylobacter jejuni (strain RM1221).